Reading from the N-terminus, the 383-residue chain is Probable acyl-CoA dehydrogenase YdiO (383 aa).

The protein belongs to the acyl-CoA dehydrogenase family. FAD serves as cofactor.

The catalysed reaction is a 2,3-saturated acyl-CoA + A = a 2,3-dehydroacyl-CoA + AH2. The chain is Probable acyl-CoA dehydrogenase YdiO (ydiO) from Escherichia coli O157:H7.